The chain runs to 366 residues: Fructose-bisphosphate aldolase 2 (366 aa).

Arg60 and Lys150 together coordinate substrate. Glu191 functions as the Proton acceptor in the catalytic mechanism. Lys233 acts as the Schiff-base intermediate with dihydroxyacetone-P in catalysis.

Belongs to the class I fructose-bisphosphate aldolase family.

It carries out the reaction beta-D-fructose 1,6-bisphosphate = D-glyceraldehyde 3-phosphate + dihydroxyacetone phosphate. It functions in the pathway carbohydrate degradation; glycolysis; D-glyceraldehyde 3-phosphate and glycerone phosphate from D-glucose: step 4/4. In Caenorhabditis elegans, this protein is Fructose-bisphosphate aldolase 2 (aldo-2).